The following is a 106-amino-acid chain: 3-phenylpropionate/cinnamic acid dioxygenase ferredoxin subunit (106 aa).

One can recognise a Rieske domain in the interval 4–99; it reads IYACPVADVP…VHVEGGDIFI (96 aa). Residues cysteine 42, histidine 44, cysteine 62, and histidine 65 each coordinate [2Fe-2S] cluster.

It belongs to the bacterial ring-hydroxylating dioxygenase ferredoxin component family. As to quaternary structure, this dioxygenase system consists of four proteins: the two subunits of the hydroxylase component (HcaE and HcaF), a ferredoxin (HcaC) and a ferredoxin reductase (HcaD). It depends on [2Fe-2S] cluster as a cofactor.

Its pathway is aromatic compound metabolism; 3-phenylpropanoate degradation. Part of the multicomponent 3-phenylpropionate dioxygenase, that converts 3-phenylpropionic acid (PP) and cinnamic acid (CI) into 3-phenylpropionate-dihydrodiol (PP-dihydrodiol) and cinnamic acid-dihydrodiol (CI-dihydrodiol), respectively. This protein seems to be a 2Fe-2S ferredoxin. This chain is 3-phenylpropionate/cinnamic acid dioxygenase ferredoxin subunit, found in Escherichia coli O139:H28 (strain E24377A / ETEC).